The following is a 612-amino-acid chain: Coagulation factor X-activating enzyme heavy chain (612 aa).

Positions 1–20 (MMQVLLVTISLAVFPYQGSS) are cleaved as a signal peptide. The propeptide at 21–193 (IILESGNVND…KKASQLVATS (173 aa)) is or 194. The Peptidase M12B domain occupies 201–395 (TFIELVIVVD…YKPKCILNPP (195 aa)). Ca(2+) is bound at residue glutamate 204. N-linked (GlcNAc...) asparagine glycosylation is present at asparagine 259. Ca(2+) is bound at residue aspartate 286. Intrachain disulfides connect cysteine 310–cysteine 390, cysteine 350–cysteine 374, and cysteine 352–cysteine 357. Histidine 335 is a binding site for Zn(2+). The active site involves glutamate 336. Positions 339 and 345 each coordinate Zn(2+). Residues asparagine 353 and asparagine 373 are each glycosylated (N-linked (GlcNAc...) asparagine). Positions 390, 393, 405, 408, 412, 415, and 418 each coordinate Ca(2+). The Disintegrin domain occupies 403–489 (PPICGNEIWE…ECPADGFHAN (87 aa)). Cysteine 461 and cysteine 481 form a disulfide bridge. The D/ECD-tripeptide motif lies at 467-469 (ECD).

It belongs to the venom metalloproteinase (M12B) family. P-III subfamily. P-IIId sub-subfamily. As to quaternary structure, heterotrimer; disulfide-linked. The heterotrimer consists of 1 heavy chain and 2 light chains (lectins): LC1 and LC2 (AC Q7T045 and AC Q696W1). Zn(2+) is required as a cofactor. In terms of processing, N-glycosylated. Contains 8.0% of hexoses, 2.5% of hexosamines and 2.5% of sialic acids. Expressed by the venom gland.

It localises to the secreted. The catalysed reaction is Specifically activates several components of the blood clotting system, including coagulation factor X, coagulation factor IX and protein C by cleavage of Arg-|-Xaa bonds. Has no action on insulin B chain.. With respect to regulation, calcium is required for the activity of the heterotrimer. Functionally, catalytic subunit of blood coagulation factor X-activating enzyme. Activates coagulation factor X (F10) by cleaving the Arg(234)-Ile(235) bond, activates coagulation factor IX (F9) by cleaving the Arg(226)-Val(227) bond and is also able to activate protein C (PROC). The chain is Coagulation factor X-activating enzyme heavy chain from Macrovipera lebetinus (Levantine viper).